The primary structure comprises 375 residues: Chaperone protein DnaJ (375 aa).

Positions 5–70 (DYYDVLGVNR…QKRGAYDQFG (66 aa)) constitute a J domain. The CR-type zinc-finger motif lies at 135–213 (GCEKQIRIPS…CHGAGQKKTT (79 aa)). Cys-148, Cys-151, Cys-165, Cys-168, Cys-187, Cys-190, Cys-201, and Cys-204 together coordinate Zn(2+). CXXCXGXG motif repeat units follow at residues 148–155 (CSTCNGTG), 165–172 (CATCGGHG), 187–194 (CPTCHGTG), and 201–208 (CGSCHGAG).

It belongs to the DnaJ family. As to quaternary structure, homodimer. The cofactor is Zn(2+).

The protein localises to the cytoplasm. Functionally, participates actively in the response to hyperosmotic and heat shock by preventing the aggregation of stress-denatured proteins and by disaggregating proteins, also in an autonomous, DnaK-independent fashion. Unfolded proteins bind initially to DnaJ; upon interaction with the DnaJ-bound protein, DnaK hydrolyzes its bound ATP, resulting in the formation of a stable complex. GrpE releases ADP from DnaK; ATP binding to DnaK triggers the release of the substrate protein, thus completing the reaction cycle. Several rounds of ATP-dependent interactions between DnaJ, DnaK and GrpE are required for fully efficient folding. Also involved, together with DnaK and GrpE, in the DNA replication of plasmids through activation of initiation proteins. This Chromobacterium violaceum (strain ATCC 12472 / DSM 30191 / JCM 1249 / CCUG 213 / NBRC 12614 / NCIMB 9131 / NCTC 9757 / MK) protein is Chaperone protein DnaJ.